Here is an 860-residue protein sequence, read N- to C-terminus: MQEQYRPEEIESKVQLHWDEKRTFEVTEDESKEKYYCLSMLPYPSGRLHMGHVRNYTIGDVIARYQRMLGKNVLQPIGWDAFGLPAEGAAVKNNTAPAPWTYDNIAYMKNQLKMLGFGYDWSRELATCTPEYYRWEQKFFTELYKKDLVYKKTSAVNWCPNDQTVLANEQVIDGCCWRCDTKVERKEIPQWFIKITAYADELLNDLDKLDHWPDTVKTMQRNWIGRSEGVEITFNVNDYDNTLTVYTTRPDTFMGCTYLAVAAGHPLAQKAAENNPELAAFIDECRNTKVAEAEMATMEKKGVDTGFKAVHPLTGEEIPVWAANFVLMEYGTGAVMAVPGHDQRDYEFASKYGLNIKPVILAADGSEPDLSQQALTEKGVLFNSGEFNGLDHEAAFNAIADKLTAMGVGERKVNYRLRDWGVSRQRYWGAPIPMVTLEDGTVMPTPDDQLPVILPEDVVMDGITSPIKADPEWAKTTVNGMPALRETDTFDTFMESSWYYARYTCPEYKEGMLDSKAANYWLPVDIYIGGIEHAIMHLLYFRFFHKLMRDAGMVNSDEPAKQLLCQGMVLADAFYYVGENGERNWVSPVDAIVERDEKGRIVKAKDAAGHELVYTGMSKMSKSKNNGIDPQVMVERYGADTVRLFMMFASPADMTLEWQESGVEGANRFLKRVWKLVYEHTAKGDVAALNVDALTEDQKALRRDVHKTIAKVTDDIGRRQTFNTAIAAIMELMNKLAKAPTDGEQDRALMQEALLAVVRMLNPFTPHICFTLWQELKGEGDIDNAPWPVADEKAMVEDSTLVVVQVNGKVRAKITVPVDATEEQVRERAGQEHLVAKYLDGVTVRKVIYVPGKLLNLVVG.

The 'HIGH' region signature appears at 42-52 (PYPSGRLHMGH). Residues 619 to 623 (KMSKS) carry the 'KMSKS' region motif. K622 is an ATP binding site.

It belongs to the class-I aminoacyl-tRNA synthetase family.

The protein localises to the cytoplasm. The catalysed reaction is tRNA(Leu) + L-leucine + ATP = L-leucyl-tRNA(Leu) + AMP + diphosphate. In Escherichia coli O17:K52:H18 (strain UMN026 / ExPEC), this protein is Leucine--tRNA ligase.